The chain runs to 269 residues: Formamidopyrimidine-DNA glycosylase (269 aa).

Catalysis depends on Pro2, which acts as the Schiff-base intermediate with DNA. Glu3 functions as the Proton donor in the catalytic mechanism. The Proton donor; for beta-elimination activity role is filled by Lys57. DNA contacts are provided by His90, Arg109, and Lys150. Residues 235–269 (QVYGRKGEPCRVCGTPIVASKHAQRATFYCRQCQK) form an FPG-type zinc finger. The Proton donor; for delta-elimination activity role is filled by Arg259.

This sequence belongs to the FPG family. As to quaternary structure, monomer. It depends on Zn(2+) as a cofactor.

The enzyme catalyses Hydrolysis of DNA containing ring-opened 7-methylguanine residues, releasing 2,6-diamino-4-hydroxy-5-(N-methyl)formamidopyrimidine.. It carries out the reaction 2'-deoxyribonucleotide-(2'-deoxyribose 5'-phosphate)-2'-deoxyribonucleotide-DNA = a 3'-end 2'-deoxyribonucleotide-(2,3-dehydro-2,3-deoxyribose 5'-phosphate)-DNA + a 5'-end 5'-phospho-2'-deoxyribonucleoside-DNA + H(+). Its function is as follows. Involved in base excision repair of DNA damaged by oxidation or by mutagenic agents. Acts as a DNA glycosylase that recognizes and removes damaged bases. Has a preference for oxidized purines, such as 7,8-dihydro-8-oxoguanine (8-oxoG). Has AP (apurinic/apyrimidinic) lyase activity and introduces nicks in the DNA strand. Cleaves the DNA backbone by beta-delta elimination to generate a single-strand break at the site of the removed base with both 3'- and 5'-phosphates. The chain is Formamidopyrimidine-DNA glycosylase from Enterobacter sp. (strain 638).